A 159-amino-acid chain; its full sequence is Cyclic pyranopterin monophosphate synthase (159 aa).

Residues 75–77 and 113–114 contribute to the substrate site; these read LCH and ME. Residue Asp-128 is part of the active site.

The protein belongs to the MoaC family. Homohexamer; trimer of dimers.

It carries out the reaction (8S)-3',8-cyclo-7,8-dihydroguanosine 5'-triphosphate = cyclic pyranopterin phosphate + diphosphate. The protein operates within cofactor biosynthesis; molybdopterin biosynthesis. Its function is as follows. Catalyzes the conversion of (8S)-3',8-cyclo-7,8-dihydroguanosine 5'-triphosphate to cyclic pyranopterin monophosphate (cPMP). This Aliivibrio salmonicida (strain LFI1238) (Vibrio salmonicida (strain LFI1238)) protein is Cyclic pyranopterin monophosphate synthase.